The primary structure comprises 199 residues: GTP cyclohydrolase-2 (199 aa).

R49–E53 is a GTP binding site. Zn(2+)-binding residues include C54, C65, and C67. GTP-binding positions include Q70, E92 to R94, and T114. The active-site Proton acceptor is D126. R128 (nucleophile) is an active-site residue. Residues T149 and K154 each coordinate GTP.

It belongs to the GTP cyclohydrolase II family. Homodimer. Zn(2+) serves as cofactor.

It carries out the reaction GTP + 4 H2O = 2,5-diamino-6-hydroxy-4-(5-phosphoribosylamino)-pyrimidine + formate + 2 phosphate + 3 H(+). Its pathway is cofactor biosynthesis; riboflavin biosynthesis; 5-amino-6-(D-ribitylamino)uracil from GTP: step 1/4. Functionally, catalyzes the conversion of GTP to 2,5-diamino-6-ribosylamino-4(3H)-pyrimidinone 5'-phosphate (DARP), formate and pyrophosphate. The polypeptide is GTP cyclohydrolase-2 (Proteus mirabilis (strain HI4320)).